The following is a 541-amino-acid chain: Forkhead box protein O (541 aa).

The span at 118 to 150 (NEQCGQLGGASSNGSTAMLHTPDGSNSHQTSFP) shows a compositional bias: polar residues. 2 disordered regions span residues 118–168 (NEQC…GKKT) and 252–291 (WVIN…GAKK). Positions 175-268 (WGNMSYAELI…KPGRNPRRTR (94 aa)) form a DNA-binding region, fork-head. T273 is subject to Phosphothreonine. Residue S319 is modified to Phosphoserine; by CaMK2.

In terms of assembly, interacts with rle-1. Interacts with unc-43 and tax-6. Interacts with jnk-1. Interacts with ftt-2. Interacts with prmt-1. Interacts with hcf-1. In terms of processing, phosphorylated by akt-1 and/or akt-2. Phosphorylated by sgk-1. Phosphorylated by unc-43. Phosphorylated by jnk-1. Dephosphorylated by tax-6 in vitro. Post-translationally, ubiquitinated. Ubiquitination by rle-1 leads to proteasome-mediated degradation. Methylation by prmt-1 prevents phosphorylation and promotes translocation to the nucleus to allow for daf-16-dependent transcription. Isoform b and isoform c are expressed in ectoderm, muscles, intestine and neurons. Isoform b is also expressed in the pharynx. The intestine appears to be the primary site of longevity function.

The protein localises to the nucleus. It is found in the cytoplasm. In terms of biological role, forkhead-type transcription factor. Binds to the promoters of genes that contain the daf-16/FOXO binding element (DBE), TTGTTTAC, in their regulatory region. Functions in the Insulin/IGF-1-like signaling (IIS) mediated pathway which affects lipogenesis, lifespan, starvation survival, heat shock and oxidative stress responses, sleep, associative memory, and dauer formation. Longevity signaling predominantly arises from expression in the intestine. Acts in the intestine to mediate the role of slo-1 in age-associated decline in motor activity and longevity. Transcriptional activity of daf-16/FOXO is negatively regulated by interaction with host cell factor homolog hcf-1; and by cytoplasmic sequestration by association with ftt-2. Inhibition is required for the carbon dioxide (CO2) avoidance response. Upon loss of inhibition, daf-16 translocates to the nucleus to regulate genes that result in delayed reproduction and growth while increasing stress resistance starvation tolerance and longevity. Association with arginine methyltransferase prmt-1 prevents phosphorylation and allows for translocation to the nucleus and the subsequent transcription of longevity-related genes. Modulation of its activity by cGMP levels in sensory neurons regulates lifespan. Has a protective role against muscle dystrophy. Involved in mediating protection against aberrant protein aggregation proteotoxicity. Influences transcription of genes that code for proteins involved in immunity as part of a general stress response. Targets genes that inhibit and stimulate tumor growth. Targets kinases, phosphatases and transcription factors that are primarily involved in signaling and gene regulation. Thought to regulate ins-7 in FOXO-to-FOXO signaling, which coordinates daf-16 expression. Activity is positively regulated by shc-1-mediated inhibition of daf-2 and activation of JNK pathway. Through the regulation of its activity by shc-1-mediated inhibition of daf-2 and activation of JNK pathway, plays a role in maintaining the integrity of the gonad. Functions by indirect interaction with jnk-1 of the mitogen-activated protein kinase (MAPK) pathway. Involved in increased proteasome activity by activating expression of rpn-6.1 in response to proteotoxic stress, leading to enhanced assembly of the 26S proteasome, followed by higher proteasome activity. Also regulates proteasome activity in the intestine by preventing expression of deubiquitinase ubh-4. Represses transcription of natc-1. Involved in regulation of srh-234 expression. Binds to the promoter of the AMPK-gamma regulatory subunit, aakg-4, and activates its transcription. Also activates transcription of AMPK-gamma regulatory subunit, aakg-1. Maintains endoplasmic reticulum (ER) function by inducing protein degradation and elimination to remove misfolded secretory proteins from the ER independently of the ire-1/xbp-1 unfolded protein response pathway. Regulates epidermal innate immunity to nematophagous fungal infection and physical wounding which trigger bli-3 induced ROS release, leading to daf-16 activation independently of daf-2 signaling. May negatively regulate resistance to stress caused by oxidized cholesterol adducts by preventing the activation of daf-9 and nuclear hormone receptor daf-12, two members of the steroid signaling pathway. Promotes apoptosis during embryonic development. Probably through the regulation of the autophagy genes atg-18 and atg-16.2, plays a role in regulating stem cell number in the germline during larval development. Plays a role in learning and memory; including associative memory, and aversive gustatory associated learning known as salt avoidance learning. Plays a role in regulating gene transcription in response to white light exposure. Binds to the promoter of dex-1 to positively regulate its expression in seam cells during the dauer phase. Plays a role in transgenerational lipid accumulation in response to a high-fat diet. Functions in the Insulin/IGF-1-like signaling (IIS) mediated pathway. May play a role in lifespan modulation, but less significant than that played by isoforms d and f. Its function is as follows. Functions in the Insulin/IGF-1-like signaling (IIS) mediated pathway. Transcript level in the early adult may play a role in lifespan modulation, but effect is more significant than that played by isoform a. The chain is Forkhead box protein O from Caenorhabditis elegans.